A 468-amino-acid chain; its full sequence is Transmembrane protein 151A (468 aa).

Residues M1–E20 are disordered. 2 helical membrane passes run C45–A65 and Y98–W118. Residues V384–E438 form a disordered region.

It belongs to the TMEM151 family. Highly expressed in the central nervous system (CNS) including the cerebral cortex, hippocampus, spinal cord, brainstem, and thalamus. Expression is relatively low during postnatal stages but highly expressed at postnatal day 14 (P14), and declined in adulthood. Also expressed in the stomach, heart, liver, spleen, lung, kidney, and muscle.

The protein resides in the endoplasmic reticulum membrane. It is found in the cell projection. The protein localises to the axon. It localises to the dendrite. This chain is Transmembrane protein 151A (Tmem151a), found in Mus musculus (Mouse).